We begin with the raw amino-acid sequence, 363 residues long: Peptide chain release factor 1 (363 aa).

An N5-methylglutamine modification is found at glutamine 237.

The protein belongs to the prokaryotic/mitochondrial release factor family. In terms of processing, methylated by PrmC. Methylation increases the termination efficiency of RF1.

The protein localises to the cytoplasm. Functionally, peptide chain release factor 1 directs the termination of translation in response to the peptide chain termination codons UAG and UAA. The polypeptide is Peptide chain release factor 1 (prfA) (Mycoplasma capricolum subsp. capricolum (strain California kid / ATCC 27343 / NCTC 10154)).